Consider the following 105-residue polypeptide: Extracellular guanyl-specific ribonuclease Fl1 (105 aa).

2 cysteine pairs are disulfide-bonded: cysteine 5-cysteine 101 and cysteine 23-cysteine 82. Histidine 39 is a catalytic residue. Glutamate 57 serves as the catalytic Proton acceptor. Histidine 90 (proton donor) is an active-site residue.

Belongs to the ribonuclease N1/T1 family.

The catalysed reaction is [RNA] containing guanosine + H2O = an [RNA fragment]-3'-guanosine-3'-phosphate + a 5'-hydroxy-ribonucleotide-3'-[RNA fragment].. This is Extracellular guanyl-specific ribonuclease Fl1 from Gibberella baccata (Fusarium lateritium).